A 950-amino-acid chain; its full sequence is Bifunctional glutamine synthetase adenylyltransferase/adenylyl-removing enzyme (950 aa).

The segment at 1 to 443 (MSLPSPLLPV…VFVTLIGDEE (443 aa)) is adenylyl removase. Residues 450 to 950 (ERHFNELWDM…WQEWLESSTI (501 aa)) are adenylyl transferase.

Belongs to the GlnE family. The cofactor is Mg(2+).

The enzyme catalyses [glutamine synthetase]-O(4)-(5'-adenylyl)-L-tyrosine + phosphate = [glutamine synthetase]-L-tyrosine + ADP. It carries out the reaction [glutamine synthetase]-L-tyrosine + ATP = [glutamine synthetase]-O(4)-(5'-adenylyl)-L-tyrosine + diphosphate. Involved in the regulation of glutamine synthetase GlnA, a key enzyme in the process to assimilate ammonia. When cellular nitrogen levels are high, the C-terminal adenylyl transferase (AT) inactivates GlnA by covalent transfer of an adenylyl group from ATP to specific tyrosine residue of GlnA, thus reducing its activity. Conversely, when nitrogen levels are low, the N-terminal adenylyl removase (AR) activates GlnA by removing the adenylyl group by phosphorolysis, increasing its activity. The regulatory region of GlnE binds the signal transduction protein PII (GlnB) which indicates the nitrogen status of the cell. The sequence is that of Bifunctional glutamine synthetase adenylyltransferase/adenylyl-removing enzyme from Vibrio vulnificus (strain YJ016).